We begin with the raw amino-acid sequence, 428 residues long: ATP-dependent RNA helicase RhlB (428 aa).

The Q motif motif lies at 9-37; the sequence is KKFSDFALHPKVIEALDNKGFSNCTPIQA. One can recognise a Helicase ATP-binding domain in the interval 40–219; that stretch reads LPFTVEGRDV…FEQMNHAEYI (180 aa). Residue 53-60 coordinates ATP; that stretch reads AQTGTGKT. The DEAD box signature appears at 165 to 168; sequence DEAD. One can recognise a Helicase C-terminal domain in the interval 245–390; sequence RLLQTLLEEE…VSKYNSQALL (146 aa). The interval 392–428 is disordered; that stretch reads DLPAPKRRYRSRSGNHQRRNNLSHRNNTPRNNRKRSG. Residues 396-413 show a composition bias toward basic residues; sequence PKRRYRSRSGNHQRRNNL.

This sequence belongs to the DEAD box helicase family. RhlB subfamily. As to quaternary structure, component of the RNA degradosome, which is a multiprotein complex involved in RNA processing and mRNA degradation.

It localises to the cytoplasm. It carries out the reaction ATP + H2O = ADP + phosphate + H(+). In terms of biological role, DEAD-box RNA helicase involved in RNA degradation. Has RNA-dependent ATPase activity and unwinds double-stranded RNA. This chain is ATP-dependent RNA helicase RhlB, found in Photorhabdus laumondii subsp. laumondii (strain DSM 15139 / CIP 105565 / TT01) (Photorhabdus luminescens subsp. laumondii).